A 653-amino-acid polypeptide reads, in one-letter code: Endoglin (653 aa).

An N-terminal signal peptide occupies residues 1-26 (MDRGVLPLPITLLFVIYSFVPTTGLA). The OR1, N-terminal part stretch occupies residues 27–47 (ERVGCDLQPVDPTRGEVTFTT). Residues 27 to 337 (ERVGCDLQPV…SSCGGVFQTT (311 aa)) are required for interaction with GDF2. The Extracellular portion of the chain corresponds to 27-581 (ERVGCDLQPV…IVSPDLSGKG (555 aa)). Intrachain disulfides connect cysteine 31-cysteine 209, cysteine 54-cysteine 184, cysteine 244-cysteine 330, cysteine 350-cysteine 382, cysteine 363-cysteine 442, cysteine 394-cysteine 412, and cysteine 493-cysteine 549. Residues 48-201 (SQVSEGCVAQ…MGATLEWQPR (154 aa)) form an OR2 region. 3 N-linked (GlcNAc...) asparagine glycosylation sites follow: asparagine 89, asparagine 135, and asparagine 266. Residues 202–330 (AQTPVQSCRL…SNVSLRASSC (129 aa)) form an OR1, C-terminal part region. Residues 270–282 (QILTTGEYSVKIF) are essential for interaction with GDF2. Asparagine 307 and asparagine 322 each carry an N-linked (GlcNAc...) asparagine glycan. A ZP domain is found at 363–510 (CGNQVMTLAL…GDMVELIQSR (148 aa)). A helical transmembrane segment spans residues 582–606 (LVLPSVLGITFGAFLIGALLTAALW). Over 607-653 (YIYSHTRGPSKREPVVAVAAPASSESSSTNHSIGSTQSTPCSTSSMA) the chain is Cytoplasmic. Low complexity predominate over residues 624–634 (VAAPASSESSS). Residues 624 to 653 (VAAPASSESSSTNHSIGSTQSTPCSTSSMA) are disordered. The span at 635–653 (TNHSIGSTQSTPCSTSSMA) shows a compositional bias: polar residues. Serine 641 and serine 644 each carry phosphoserine; by TGFBR1.

As to quaternary structure, homodimer; disulfide-linked. Forms a heteromeric complex with the signaling receptors for transforming growth factor-beta: TGFBR1 and/or TGFBR2. Interacts with TGFB1. It is able to bind TGFB1 and TGFB2 with high affinity, but not TGFB3. Interacts with GDF2, forming a heterotetramer with a 2:2 stoichiometry. Interacts with ACVRL1. Can form a heteromeric complex with GDF2 and ACVRL1. Interacts with BMP10. Interacts with DYNLT4. Interacts with ARRB2. As to expression, detected on blood vessels (at protein level). Detected on adult pulmonary artery, capillaries supporting the heart muscle and lung alveolar capillary endothelial cells. Endoglin is restricted to endothelial cells in all tissues except bone marrow and is also found in stromal cells within the connective tissue of intestine, stomach, heart, skeletal muscle, uterus, ovary, oviduct, testis and thymus.

The protein resides in the cell membrane. Functionally, vascular endothelium glycoprotein that plays an important role in the regulation of angiogenesis. Required for normal structure and integrity of adult vasculature. Regulates the migration of vascular endothelial cells. Required for normal extraembryonic angiogenesis and for embryonic heart development. May regulate endothelial cell shape changes in response to blood flow, which drive vascular remodeling and establishment of normal vascular morphology during angiogenesis. May play a role in the binding of endothelial cells to integrins. Acts as a TGF-beta coreceptor and is involved in the TGF-beta/BMP signaling cascade that ultimately leads to the activation of SMAD transcription factors. Required for GDF2/BMP9 signaling through SMAD1 in endothelial cells and modulates TGFB1 signaling through SMAD3. The chain is Endoglin (Eng) from Mus musculus (Mouse).